Here is a 656-residue protein sequence, read N- to C-terminus: uncharacterized protein (656 aa).

The segment at 623-656 is disordered; the sequence is EIDIPGTPASIDPEWSRPPGSITDDHVFDAPLHR. The segment covering 645-656 has biased composition (basic and acidic residues); that stretch reads TDDHVFDAPLHR.

This is an uncharacterized protein from Mycobacterium tuberculosis (strain CDC 1551 / Oshkosh).